A 276-amino-acid polypeptide reads, in one-letter code: Protein canopy homolog 3 (276 aa).

An N-terminal signal peptide occupies residues 1–16; that stretch reads MNVFISVVLFLGSARA. The region spanning 30-269 is the Saposin B-type domain; it reads NKCEVCKFVS…EEEIQKKVPL (240 aa). Cystine bridges form between Cys-32-Cys-190, Cys-35-Cys-178, and Cys-88-Cys-150. Positions 137-162 form a coiled coil; sequence NETSAEVADLKKQCDVMVEQYEDVIE. Positions 206–276 are disordered; the sequence is AEDKKKKKGK…VPLNQPKTEL (71 aa). 2 stretches are compositionally biased toward basic residues: residues 210–219 and 228–239; these read KKKKGKKKKG and KEKKVKKKKKKS. Basic and acidic residues predominate over residues 240 to 252; sequence KISDSESSKRRME.

It belongs to the canopy family.

The protein localises to the endoplasmic reticulum. In terms of biological role, toll-like receptor (TLR)-specific co-chaperone for HSP90B1. Required for proper TLR folding and hence controls TLR exit from the endoplasmic reticulum. Consequently, required for immune responses. The polypeptide is Protein canopy homolog 3 (cnpy3) (Danio rerio (Zebrafish)).